The chain runs to 667 residues: E3 ubiquitin-protein ligase Midline-1 (667 aa).

Residues 10 to 60 form an RING-type zinc finger; that stretch reads CPICLELFEDPLLLPCAHSLCFNCAHRILVSHCATNEPVESINAFQCPTCR. 2 positions are modified to phosphoserine: Ser92 and Ser96. B box-type zinc fingers lie at residues 116 to 165 and 172 to 212; these read KVLC…IEPI and GLMC…VAAL. 12 residues coordinate Zn(2+): Cys119, Cys122, Cys134, Cys137, Cys142, Cys145, His150, His159, Cys175, His178, Cys198, and His204. Residues 205 to 264 adopt a coiled-coil conformation; the sequence is RDHQVAALSERYDKLKQNLESNLTNLIKRNTELETLLAKLIQTCQHVEVNASRQEAKLTE. Residues 320–379 form the COS domain; that stretch reads LKENDHARFLQTAKNITERVSMATASSQVLIPEINLNDTFDTFALDFSREKKLLECLDYL. The 104-residue stretch at 381–484 folds into the Fibronectin type-III domain; the sequence is APNPPTIREE…EPGKLKTNSQ (104 aa). The segment covering 471–485 has biased composition (polar residues); that stretch reads SRSSEPGKLKTNSQP. Residues 471–524 are disordered; the sequence is SRSSEPGKLKTNSQPFKLDPKSAHRKLKVSHDNLTVERDESSSKKSHTPERFTS. Residues 482-659 enclose the B30.2/SPRY domain; it reads NSQPFKLDPK…IITGLPIPDH (178 aa). Positions 499–520 are enriched in basic and acidic residues; the sequence is VSHDNLTVERDESSSKKSHTPE. At Ser511 the chain carries Phosphoserine.

Belongs to the TRIM/RBCC family. Homodimer or heterodimer with MID2. Interacts with IGBP1.

Its subcellular location is the cytoplasm. It localises to the cytoskeleton. The catalysed reaction is S-ubiquitinyl-[E2 ubiquitin-conjugating enzyme]-L-cysteine + [acceptor protein]-L-lysine = [E2 ubiquitin-conjugating enzyme]-L-cysteine + N(6)-ubiquitinyl-[acceptor protein]-L-lysine.. Functionally, has E3 ubiquitin ligase activity towards IGBP1, promoting its monoubiquitination, which results in deprotection of the catalytic subunit of protein phosphatase PP2A, and its subsequent degradation by polyubiquitination. The protein is E3 ubiquitin-protein ligase Midline-1 (Mid1) of Rattus norvegicus (Rat).